The chain runs to 196 residues: DnaA initiator-associating protein DiaA (196 aa).

Positions Leu34–Asp196 constitute an SIS domain.

Belongs to the SIS family. DiaA subfamily. Homotetramer; dimer of dimers.

Functionally, required for the timely initiation of chromosomal replication via direct interactions with the DnaA initiator protein. The protein is DnaA initiator-associating protein DiaA of Shigella boydii serotype 18 (strain CDC 3083-94 / BS512).